A 263-amino-acid polypeptide reads, in one-letter code: Tryptophan synthase alpha chain (263 aa).

Residues glutamate 49 and aspartate 60 each act as proton acceptor in the active site.

This sequence belongs to the TrpA family. In terms of assembly, tetramer of two alpha and two beta chains.

It catalyses the reaction (1S,2R)-1-C-(indol-3-yl)glycerol 3-phosphate + L-serine = D-glyceraldehyde 3-phosphate + L-tryptophan + H2O. It participates in amino-acid biosynthesis; L-tryptophan biosynthesis; L-tryptophan from chorismate: step 5/5. Its function is as follows. The alpha subunit is responsible for the aldol cleavage of indoleglycerol phosphate to indole and glyceraldehyde 3-phosphate. The chain is Tryptophan synthase alpha chain from Cereibacter sphaeroides (strain ATCC 17029 / ATH 2.4.9) (Rhodobacter sphaeroides).